The sequence spans 84 residues: Putative membrane protein insertion efficiency factor (84 aa).

The protein belongs to the UPF0161 family.

It localises to the cell inner membrane. Could be involved in insertion of integral membrane proteins into the membrane. The polypeptide is Putative membrane protein insertion efficiency factor (Shewanella pealeana (strain ATCC 700345 / ANG-SQ1)).